Reading from the N-terminus, the 255-residue chain is Imidazole glycerol phosphate synthase subunit HisF (255 aa).

Active-site residues include Asp-11 and Asp-130.

The protein belongs to the HisA/HisF family. As to quaternary structure, heterodimer of HisH and HisF.

The protein localises to the cytoplasm. The catalysed reaction is 5-[(5-phospho-1-deoxy-D-ribulos-1-ylimino)methylamino]-1-(5-phospho-beta-D-ribosyl)imidazole-4-carboxamide + L-glutamine = D-erythro-1-(imidazol-4-yl)glycerol 3-phosphate + 5-amino-1-(5-phospho-beta-D-ribosyl)imidazole-4-carboxamide + L-glutamate + H(+). It functions in the pathway amino-acid biosynthesis; L-histidine biosynthesis; L-histidine from 5-phospho-alpha-D-ribose 1-diphosphate: step 5/9. In terms of biological role, IGPS catalyzes the conversion of PRFAR and glutamine to IGP, AICAR and glutamate. The HisF subunit catalyzes the cyclization activity that produces IGP and AICAR from PRFAR using the ammonia provided by the HisH subunit. This is Imidazole glycerol phosphate synthase subunit HisF from Maricaulis maris (strain MCS10) (Caulobacter maris).